The sequence spans 1059 residues: IQ motif-containing protein H (1059 aa).

Residues lysine 6–glutamine 35 are a coiled coil. The tract at residues methionine 245–asparagine 267 is disordered. Positions histidine 401–alanine 430 constitute an IQ domain.

This chain is IQ motif-containing protein H (iqch), found in Danio rerio (Zebrafish).